The chain runs to 122 residues: Serum amyloid A-3 protein (122 aa).

The signal sequence occupies residues 1 to 18 (MKPFLAIIFCFLILGVDS). A disordered region spans residues 100–122 (ANKWGRSGKDPNHFRPAGLPSKY).

Belongs to the SAA family. In terms of tissue distribution, expressed by the liver; secreted in plasma.

The protein resides in the secreted. In terms of biological role, major acute phase reactant. Apolipoprotein of the HDL complex. In vitro exhibits antimicrobial activity against Escherichia coli, Streptococcus uberis and Pseudomonas aeruginosa. The sequence is that of Serum amyloid A-3 protein (SAA3) from Mesocricetus auratus (Golden hamster).